A 136-amino-acid chain; its full sequence is uncharacterized protein (136 aa).

This sequence belongs to the MG439/MG440 family.

This is an uncharacterized protein from Mycoplasma pneumoniae (strain ATCC 29342 / M129 / Subtype 1) (Mycoplasmoides pneumoniae).